Here is a 220-residue protein sequence, read N- to C-terminus: ATP-dependent dethiobiotin synthetase BioD (220 aa).

13–18 (EVGKTV) contributes to the ATP binding site. T17 is a binding site for Mg(2+). The active site involves K38. A substrate-binding site is contributed by S42. Residues D55, 116 to 119 (EGAG), 176 to 177 (NR), and N212 contribute to the ATP site. The Mg(2+) site is built by D55 and E116.

It belongs to the dethiobiotin synthetase family. In terms of assembly, homodimer. Mg(2+) serves as cofactor.

Its subcellular location is the cytoplasm. The enzyme catalyses (7R,8S)-7,8-diammoniononanoate + CO2 + ATP = (4R,5S)-dethiobiotin + ADP + phosphate + 3 H(+). Its pathway is cofactor biosynthesis; biotin biosynthesis; biotin from 7,8-diaminononanoate: step 1/2. In terms of biological role, catalyzes a mechanistically unusual reaction, the ATP-dependent insertion of CO2 between the N7 and N8 nitrogen atoms of 7,8-diaminopelargonic acid (DAPA, also called 7,8-diammoniononanoate) to form a ureido ring. This Photobacterium profundum (strain SS9) protein is ATP-dependent dethiobiotin synthetase BioD.